Reading from the N-terminus, the 871-residue chain is Alanine--tRNA ligase (871 aa).

Residues histidine 559, histidine 563, cysteine 661, and histidine 665 each coordinate Zn(2+).

It belongs to the class-II aminoacyl-tRNA synthetase family. The cofactor is Zn(2+).

The protein localises to the cytoplasm. It catalyses the reaction tRNA(Ala) + L-alanine + ATP = L-alanyl-tRNA(Ala) + AMP + diphosphate. Functionally, catalyzes the attachment of alanine to tRNA(Ala) in a two-step reaction: alanine is first activated by ATP to form Ala-AMP and then transferred to the acceptor end of tRNA(Ala). Also edits incorrectly charged Ser-tRNA(Ala) and Gly-tRNA(Ala) via its editing domain. The sequence is that of Alanine--tRNA ligase from Aquifex pyrophilus.